The following is a 356-amino-acid chain: Tyrosine recombinase XerS (356 aa).

The Core-binding (CB) domain maps to 16–121 (IMPWYVLDYY…ALSSLYKYLT (106 aa)). Residues 169–354 (AFLDYVDKEY…VNDEQKNALD (186 aa)) form the Tyr recombinase domain. Residues Arg-210, Lys-234, His-306, Arg-309, and His-332 contribute to the active site. The O-(3'-phospho-DNA)-tyrosine intermediate role is filled by Tyr-341.

It belongs to the 'phage' integrase family. XerS subfamily.

Its subcellular location is the cytoplasm. Its activity is regulated as follows. FtsK is required for recombination. Functionally, site-specific tyrosine recombinase, which acts by catalyzing the cutting and rejoining of the recombining DNA molecules. Essential to convert dimers of the bacterial chromosome into monomers to permit their segregation at cell division. The protein is Tyrosine recombinase XerS of Streptococcus equi subsp. equi (strain 4047).